The primary structure comprises 204 residues: MDSLISIPFLNDESVRSTIYRKVEEFRSIGKSSKEVLFKELVFCILAANTSASMSLRMQESIGDGFLYLSRDDLRKALKENKYRFYNVRSDFIVKSRNIIDDLPALVASPDHEGSRDYLVENVYGIGYKEASHFLRNVGIFDFAILDKHIMKWMAQYYPVKKNTSRKNYLYNEEIFRNISAGFGIEPGILDLFIWYEETGTVIK.

Residues Lys129 and Asp147 contribute to the active site.

The protein belongs to the type-2 OGG1 family.

The enzyme catalyses 2'-deoxyribonucleotide-(2'-deoxyribose 5'-phosphate)-2'-deoxyribonucleotide-DNA = a 3'-end 2'-deoxyribonucleotide-(2,3-dehydro-2,3-deoxyribose 5'-phosphate)-DNA + a 5'-end 5'-phospho-2'-deoxyribonucleoside-DNA + H(+). Catalyzes the excision of an oxidatively damaged form of guanine (7,8-dihydro-8-oxoguanine = 8-oxoG) from DNA. Also cleaves the DNA backbone at apurinic/apyrimidinic sites (AP sites). The chain is 8-oxoguanine DNA glycosylase/AP lyase from Thermoplasma acidophilum (strain ATCC 25905 / DSM 1728 / JCM 9062 / NBRC 15155 / AMRC-C165).